The following is a 426-amino-acid chain: DNA primase DnaG (426 aa).

In terms of domain architecture, Toprim spans 171–245 (DTVILVEGRA…KVDFVARAPP (75 aa)). The Mg(2+) site is built by Glu-177, Asp-219, and Asp-221. The tract at residues 407–426 (KSEENIQESVSTGESAQTSP) is disordered. Polar residues predominate over residues 413 to 426 (QESVSTGESAQTSP).

The protein belongs to the archaeal DnaG primase family. Forms a ternary complex with MCM helicase and DNA. Component of the archaeal exosome complex. It depends on Mg(2+) as a cofactor.

It catalyses the reaction ssDNA + n NTP = ssDNA/pppN(pN)n-1 hybrid + (n-1) diphosphate.. In terms of biological role, RNA polymerase that catalyzes the synthesis of short RNA molecules used as primers for DNA polymerase during DNA replication. Also part of the exosome, which is a complex involved in RNA degradation. Acts as a poly(A)-binding protein that enhances the interaction between heteromeric, adenine-rich transcripts and the exosome. The chain is DNA primase DnaG from Thermofilum pendens (strain DSM 2475 / Hrk 5).